The sequence spans 276 residues: MQIHTTIQSLRAARAAVSGKVALVPTMGNLHDGHIALMRQATGHADSIVASIFVNRLQFGPRDDFDRYPRTFKADCERLEAAGVAHVFAPDEGEMYPQPQQYHVDPAPAHVTILEGEFRPDHFRGVATVVLKLLNIVRPDVALFGKKDYQQLMVLTNMVRELAVAVEVVPGETIRATDGLALSSRNGYLSAEERVEAPRLYRELARVRDAVRDGDRDFLKLETEAVAGLAAHGWHPDYIAVRRRADLQPPGDANDPLVVLAAAKLGHTRLIDNLEI.

27 to 34 serves as a coordination point for ATP; sequence MGNLHDGH. H34 functions as the Proton donor in the catalytic mechanism. Q58 serves as a coordination point for (R)-pantoate. Q58 contacts beta-alanine. ATP is bound at residue 145–148; sequence GKKD. (R)-pantoate is bound at residue Q151. ATP-binding positions include I174 and 182-185; that span reads LSSR.

Belongs to the pantothenate synthetase family. In terms of assembly, homodimer.

The protein localises to the cytoplasm. It catalyses the reaction (R)-pantoate + beta-alanine + ATP = (R)-pantothenate + AMP + diphosphate + H(+). The protein operates within cofactor biosynthesis; (R)-pantothenate biosynthesis; (R)-pantothenate from (R)-pantoate and beta-alanine: step 1/1. Its function is as follows. Catalyzes the condensation of pantoate with beta-alanine in an ATP-dependent reaction via a pantoyl-adenylate intermediate. The sequence is that of Pantothenate synthetase from Aromatoleum aromaticum (strain DSM 19018 / LMG 30748 / EbN1) (Azoarcus sp. (strain EbN1)).